The sequence spans 504 residues: ATP synthase subunit alpha (504 aa).

ATP is bound at residue 171–178; it reads GDRATGKT.

This sequence belongs to the ATPase alpha/beta chains family. In terms of assembly, F-type ATPases have 2 components, CF(1) - the catalytic core - and CF(0) - the membrane proton channel. CF(1) has five subunits: alpha(3), beta(3), gamma(1), delta(1), epsilon(1). CF(0) has three main subunits: a(1), b(2) and c(9-12). The alpha and beta chains form an alternating ring which encloses part of the gamma chain. CF(1) is attached to CF(0) by a central stalk formed by the gamma and epsilon chains, while a peripheral stalk is formed by the delta and b chains.

Its subcellular location is the cell inner membrane. It catalyses the reaction ATP + H2O + 4 H(+)(in) = ADP + phosphate + 5 H(+)(out). Produces ATP from ADP in the presence of a proton gradient across the membrane. The alpha chain is a regulatory subunit. The chain is ATP synthase subunit alpha from Sulfurihydrogenibium sp. (strain YO3AOP1).